Consider the following 189-residue polypeptide: dTTP/UTP pyrophosphatase (189 aa).

Residue Asp-64 is the Proton acceptor of the active site.

Belongs to the Maf family. YhdE subfamily. It depends on a divalent metal cation as a cofactor.

It localises to the cytoplasm. The enzyme catalyses dTTP + H2O = dTMP + diphosphate + H(+). It carries out the reaction UTP + H2O = UMP + diphosphate + H(+). Its function is as follows. Nucleoside triphosphate pyrophosphatase that hydrolyzes dTTP and UTP. May have a dual role in cell division arrest and in preventing the incorporation of modified nucleotides into cellular nucleic acids. In Syntrophomonas wolfei subsp. wolfei (strain DSM 2245B / Goettingen), this protein is dTTP/UTP pyrophosphatase.